A 589-amino-acid chain; its full sequence is MRLWQWSIAVAICLVMVTEARLRRHHRKRRFVSSNFDEFYCGESAHAQSQFEEERESNSSKVSSVHSTQFNWGLDNTICIKLQNVVHVLKYERLEQRYPIENSYTFSVPLIDTNCKCHCYGFGTNDVCNVEKYADDRNCTTSSEFPTCYTKYHPAVEPLDCPVTSIPAKACCDIKLKPRDGRMFRAVKLQQPINDMIISHSIFANNSGKMMKVLGPDEFRINLLKGKEQFELTEYHRISVQLVASSPQQQLREGMYYFPEENHNDLREGKINEITESDLDKLGWYRRVGNDWQVATSGLLLRNAHKVVIKNCKGQVHMDQFSGTKNFVLRGTQYNDTYNERRVSDNNFVRSVKVDESSREITIVHEHGTAAQVSLKTDTRPNLTKSQSLLANFTGSITLDHDGNRMLNVTFFGVKGTVHIKMYVNDRKLIATFACTAQFGTSLKDDGSRISLPSTINQAQWVCILPDEQPTKSEICKWIPYEEKAMRTPRQEQSWSKGHSPCSQAECNSLKSGVSDLFPWIMNFDYFMAHGGDFTEWLKIGIHIVIAVGLLLLLILLFTKCLVPLACCSLSIPFKNRNKKKKKKNSSDY.

The first 20 residues, 1–20, serve as a signal peptide directing secretion; the sequence is MRLWQWSIAVAICLVMVTEA. The Extracellular segment spans residues 21–537; the sequence is RLRRHHRKRR…MAHGGDFTEW (517 aa). 7 N-linked (GlcNAc...) asparagine glycosylation sites follow: asparagine 58, asparagine 138, asparagine 205, asparagine 335, asparagine 382, asparagine 392, and asparagine 408. Residues 538-558 traverse the membrane as a helical segment; it reads LKIGIHIVIAVGLLLLLILLF. Topologically, residues 559–589 are cytoplasmic; it reads TKCLVPLACCSLSIPFKNRNKKKKKKNSSDY.

This sequence belongs to the EFF/AFF cell fusogen family. Expressed in amphid sheath cells.

The protein localises to the cell membrane. The protein resides in the apical cell membrane. Functionally, required for cell fusion events during development including the fusion of anchor cells (AC), vulval A and vulval D rings, and late epidermal seam cells. Required for amphid sheath cell fusion induced by entry into dauer stage. This chain is Cell fusion protein aff-1, found in Caenorhabditis elegans.